The sequence spans 349 residues: 3-dehydroquinate synthase (349 aa).

NAD(+) is bound by residues 63-68 (DGEEYK), 97-101 (GVIGD), 121-122 (TT), Lys-134, Lys-143, and 161-164 (FLTT). Zn(2+) is bound by residues Glu-176, His-235, and His-252.

This sequence belongs to the sugar phosphate cyclases superfamily. Dehydroquinate synthase family. Co(2+) is required as a cofactor. It depends on Zn(2+) as a cofactor. Requires NAD(+) as cofactor.

Its subcellular location is the cytoplasm. It catalyses the reaction 7-phospho-2-dehydro-3-deoxy-D-arabino-heptonate = 3-dehydroquinate + phosphate. It functions in the pathway metabolic intermediate biosynthesis; chorismate biosynthesis; chorismate from D-erythrose 4-phosphate and phosphoenolpyruvate: step 2/7. Catalyzes the conversion of 3-deoxy-D-arabino-heptulosonate 7-phosphate (DAHP) to dehydroquinate (DHQ). This Sulfurimonas denitrificans (strain ATCC 33889 / DSM 1251) (Thiomicrospira denitrificans (strain ATCC 33889 / DSM 1251)) protein is 3-dehydroquinate synthase.